The following is an 89-amino-acid chain: Small ribosomal subunit protein uS14A (89 aa).

A disordered region spans residues 29–62; the sequence is AAGDRTALAKLPRDSNPNRLRLRDQTDGRPRGYM. Basic and acidic residues predominate over residues 49 to 58; sequence RLRDQTDGRP.

It belongs to the universal ribosomal protein uS14 family. In terms of assembly, part of the 30S ribosomal subunit. Contacts proteins S3 and S10.

Its function is as follows. Binds 16S rRNA, required for the assembly of 30S particles and may also be responsible for determining the conformation of the 16S rRNA at the A site. In Enterococcus faecalis (strain ATCC 700802 / V583), this protein is Small ribosomal subunit protein uS14A.